The chain runs to 474 residues: tRNA-2-methylthio-N(6)-dimethylallyladenosine synthase (474 aa).

An MTTase N-terminal domain is found at 3–120 (KKLHIKTWGC…LPEMINHVQE (118 aa)). [4Fe-4S] cluster-binding residues include C12, C49, C83, C157, C161, and C164. Residues 143–375 (RAEGPTAFVS…QQRISQQAME (233 aa)) form the Radical SAM core domain. The TRAM domain occupies 378–441 (RKMVGTVQRV…ASSLRGILLR (64 aa)).

The protein belongs to the methylthiotransferase family. MiaB subfamily. In terms of assembly, monomer. The cofactor is [4Fe-4S] cluster.

The protein resides in the cytoplasm. The catalysed reaction is N(6)-dimethylallyladenosine(37) in tRNA + (sulfur carrier)-SH + AH2 + 2 S-adenosyl-L-methionine = 2-methylsulfanyl-N(6)-dimethylallyladenosine(37) in tRNA + (sulfur carrier)-H + 5'-deoxyadenosine + L-methionine + A + S-adenosyl-L-homocysteine + 2 H(+). Functionally, catalyzes the methylthiolation of N6-(dimethylallyl)adenosine (i(6)A), leading to the formation of 2-methylthio-N6-(dimethylallyl)adenosine (ms(2)i(6)A) at position 37 in tRNAs that read codons beginning with uridine. The polypeptide is tRNA-2-methylthio-N(6)-dimethylallyladenosine synthase (Yersinia pseudotuberculosis serotype O:3 (strain YPIII)).